A 375-amino-acid chain; its full sequence is Putative ZDHHC-type palmitoyltransferase 8 (375 aa).

The next 2 membrane-spanning stretches (helical) occupy residues 4–24 (LFDFVVLSSFIILLPLVTDFL) and 40–60 (VVGMILVFFIVSLIFAGVSLW). N-linked (GlcNAc...) asparagine glycosylation occurs at asparagine 95. 3 consecutive transmembrane segments (helical) span residues 105–125 (ITFYFHIFFTIQLVVNLYYYY), 221–241 (FILFIGYTVMALIYACYLSFF), and 285–305 (YSFIFLCCCLIVTASFGILLF). The DHHC domain maps to 176-226 (VSDGKWSTINKPKSHHCRICKRCIDSMDHHCPFAANCIGINNHHYFILFIG). Asparagine 343 carries N-linked (GlcNAc...) asparagine glycosylation.

It belongs to the DHHC palmitoyltransferase family.

Its subcellular location is the membrane. The catalysed reaction is L-cysteinyl-[protein] + hexadecanoyl-CoA = S-hexadecanoyl-L-cysteinyl-[protein] + CoA. This chain is Putative ZDHHC-type palmitoyltransferase 8, found in Dictyostelium discoideum (Social amoeba).